A 262-amino-acid chain; its full sequence is (2Z,6E)-farnesyl diphosphate synthase (262 aa).

Asp-40 is a catalytic residue. Asp-40 contacts Mg(2+). Substrate is bound by residues 41–44 (GNRR), Trp-45, and 86–88 (STE). Asn-89 (proton acceptor) is an active-site residue. Substrate contacts are provided by residues Arg-92, Arg-211, and 217–219 (RLS). Glu-230 lines the Mg(2+) pocket.

It belongs to the UPP synthase family. Z-FPP synthase subfamily. In terms of assembly, homodimer. Mg(2+) is required as a cofactor.

Its subcellular location is the cytoplasm. It localises to the cell membrane. It carries out the reaction isopentenyl diphosphate + (2E)-geranyl diphosphate = (2Z,6E)-farnesyl diphosphate + diphosphate. In terms of biological role, catalyzes the condensation of only one isopentenyl pyrophosphate (IPP) unit in the cis configuration to E-geranyl diphosphate (E-GPP) generating the 15 carbon product (2Z,6E)-farnesyl diphosphate (Z-FPP or EZ-FPP). Z-FPP is the precursor of decaprenyl diphosphate, which has a central role in the biosynthesis of the mycobacterial cell wall. The polypeptide is (2Z,6E)-farnesyl diphosphate synthase (Mycobacterium tuberculosis (strain CDC 1551 / Oshkosh)).